A 122-amino-acid polypeptide reads, in one-letter code: Large ribosomal subunit protein bL19c (122 aa).

Belongs to the bacterial ribosomal protein bL19 family.

Its subcellular location is the plastid. It localises to the chloroplast. In Rhodomonas salina (Cryptomonas salina), this protein is Large ribosomal subunit protein bL19c (rpl19).